A 475-amino-acid chain; its full sequence is Ribulose bisphosphate carboxylase large chain (475 aa).

Positions 1 to 2 are excised as a propeptide; sequence MS. Residue Pro-3 is modified to N-acetylproline. N6,N6,N6-trimethyllysine is present on Lys-14. Substrate-binding residues include Asn-123 and Thr-173. Lys-175 functions as the Proton acceptor in the catalytic mechanism. Lys-177 contributes to the substrate binding site. Residues Lys-201, Asp-203, and Glu-204 each coordinate Mg(2+). N6-carboxylysine is present on Lys-201. The Proton acceptor role is filled by His-294. Substrate is bound by residues Arg-295, His-327, and Ser-379.

This sequence belongs to the RuBisCO large chain family. Type I subfamily. As to quaternary structure, heterohexadecamer of 8 large chains and 8 small chains; disulfide-linked. The disulfide link is formed within the large subunit homodimers. It depends on Mg(2+) as a cofactor. In terms of processing, the disulfide bond which can form in the large chain dimeric partners within the hexadecamer appears to be associated with oxidative stress and protein turnover.

The protein resides in the plastid. The protein localises to the chloroplast. The enzyme catalyses 2 (2R)-3-phosphoglycerate + 2 H(+) = D-ribulose 1,5-bisphosphate + CO2 + H2O. It catalyses the reaction D-ribulose 1,5-bisphosphate + O2 = 2-phosphoglycolate + (2R)-3-phosphoglycerate + 2 H(+). Functionally, ruBisCO catalyzes two reactions: the carboxylation of D-ribulose 1,5-bisphosphate, the primary event in carbon dioxide fixation, as well as the oxidative fragmentation of the pentose substrate in the photorespiration process. Both reactions occur simultaneously and in competition at the same active site. This chain is Ribulose bisphosphate carboxylase large chain, found in Chloranthus spicatus (Chulantree).